We begin with the raw amino-acid sequence, 529 residues long: MSDENGPSKVDLQTAMRKMRALPPNKLCFDCGARNPTWCTVTYGVFLCIDCSAVHRNLGVHLTFVRSTNLDTNWTWLQLRAMQLGGNGNANQFFKAHGCNTTEAQQKYKSRAAQMYRDKLSTLCQEAQRKFGTQLIIDTVTHAEEKPAEEEDFFAQDFGHTSASATSLSSDAYIADHKSEDSTHGPSVDHLDSSVAVPTSAPVSVILKKPIKKATLGAKKNALGAQKVRINFDEIEQRAAEKERQTAAEVAANKLAYQTELDGKKKSDDAAALQKLSAKFAMQDIDAQRKQMEAKVAKDPTKAASVDRLGMGGVGRSRAAHSVAGGIRSIKQDDVLTFKKPSQPKEDDDWEVIDDKYGKKSTNNEDDFFSKDYTSSSSKKTTKEDDFFDSFETQPVQKSRYTASSSSSSTSRAPTTRLTAGASPISDVDLQKKFGNAKAISSDMYFGTPEMDCETRSALTKCEGQTSFGSEDLWGNGSQQRQSSQVPDMSDLKDSFRAGASKVAEKWSTLSSSFSTYMSRAPPATGEKT.

Residues 13 to 129 (QTAMRKMRAL…LSTLCQEAQR (117 aa)) enclose the Arf-GAP domain. The C4-type zinc-finger motif lies at 28–51 (CFDCGARNPTWCTVTYGVFLCIDC). Residues 291–301 (QMEAKVAKDPT) show a composition bias toward basic and acidic residues. Disordered stretches follow at residues 291–313 (QMEA…GMGG), 335–357 (VLTF…DDKY), 398–424 (KSRY…GASP), and 468–493 (FGSE…SDLK). Over residues 399–420 (SRYTASSSSSSTSRAPTTRLTA) the composition is skewed to low complexity. The span at 476–487 (NGSQQRQSSQVP) shows a compositional bias: polar residues.

Functionally, GTPase-activating protein for the ADP ribosylation factor family. This is an uncharacterized protein from Caenorhabditis elegans.